The following is a 507-amino-acid chain: tRNA (guanine(10)-N(2))-methyltransferase TRMT11 (507 aa).

Basic and acidic residues predominate over residues 459-475; sequence EKTKKKEQKKKSVENHL. The tract at residues 459–507 is disordered; that stretch reads EKTKKKEQKKKSVENHLKSKNNNDVINNNSNDTNSNNNCNNENNIENQK. The segment covering 480–507 has biased composition (low complexity); sequence NNDVINNNSNDTNSNNNCNNENNIENQK.

The protein belongs to the class I-like SAM-binding methyltransferase superfamily. TRM11 methyltransferase family. As to quaternary structure, part of the heterodimeric TRMT11-TRM112 methyltransferase complex; this complex forms an active tRNA methyltransferase, where TRMT112 acts as an activator of the catalytic subunit TRMT11.

Its subcellular location is the cytoplasm. It catalyses the reaction guanosine(10) in tRNA + S-adenosyl-L-methionine = N(2)-methylguanosine(10) in tRNA + S-adenosyl-L-homocysteine + H(+). Functionally, catalytic subunit of the TRMT11-TRM112 methyltransferase complex, that specifically mediates the S-adenosyl-L-methionine-dependent N(2)-methylation of guanosine nucleotide at position 10 (m2G10) in tRNAs. This is one of the major tRNA (guanine-N(2))-methyltransferases. This Dictyostelium discoideum (Social amoeba) protein is tRNA (guanine(10)-N(2))-methyltransferase TRMT11 (trmt11).